A 690-amino-acid polypeptide reads, in one-letter code: Protein arginine N-methyltransferase 7 (690 aa).

SAM-dependent MTase PRMT-type domains lie at 14–357 and 366–690; these read QNSW…YSLW and TKSV…QKKL.

This sequence belongs to the class I-like SAM-binding methyltransferase superfamily. Protein arginine N-methyltransferase family. PRMT7 subfamily. In terms of tissue distribution, expressed at low level in ovary.

Functionally, essential arginine methyltransferase that can both catalyze the formation of omega-N monomethylarginine (MMA) and symmetrical dimethylarginine (sDMA). Specifically mediates the symmetrical dimethylation of arginine residues in the small nuclear ribonucleoproteins SmD1 and SmD3. This is Protein arginine N-methyltransferase 7 (Art7) from Drosophila melanogaster (Fruit fly).